A 118-amino-acid chain; its full sequence is Ribonuclease P protein component (118 aa).

This sequence belongs to the RnpA family. Consists of a catalytic RNA component (M1 or rnpB) and a protein subunit.

It catalyses the reaction Endonucleolytic cleavage of RNA, removing 5'-extranucleotides from tRNA precursor.. Functionally, RNaseP catalyzes the removal of the 5'-leader sequence from pre-tRNA to produce the mature 5'-terminus. It can also cleave other RNA substrates such as 4.5S RNA. The protein component plays an auxiliary but essential role in vivo by binding to the 5'-leader sequence and broadening the substrate specificity of the ribozyme. This chain is Ribonuclease P protein component, found in Mycoplasma pneumoniae (strain ATCC 29342 / M129 / Subtype 1) (Mycoplasmoides pneumoniae).